We begin with the raw amino-acid sequence, 296 residues long: NAD kinase (296 aa).

The Proton acceptor role is filled by Asp72. Residues 72-73, 146-147, Arg157, Lys174, Asp176, 187-192, and Gln247 each bind NAD(+); these read DG, ND, and TAYALS.

It belongs to the NAD kinase family. A divalent metal cation serves as cofactor.

The protein resides in the cytoplasm. It carries out the reaction NAD(+) + ATP = ADP + NADP(+) + H(+). Involved in the regulation of the intracellular balance of NAD and NADP, and is a key enzyme in the biosynthesis of NADP. Catalyzes specifically the phosphorylation on 2'-hydroxyl of the adenosine moiety of NAD to yield NADP. The polypeptide is NAD kinase (Pseudomonas savastanoi pv. phaseolicola (strain 1448A / Race 6) (Pseudomonas syringae pv. phaseolicola (strain 1448A / Race 6))).